A 662-amino-acid polypeptide reads, in one-letter code: Methyl-accepting chemotaxis protein McpB (662 aa).

Residues 1–16 are Cytoplasmic-facing; it reads MKTFINWLKKPSISKK. The helical transmembrane segment at 17–37 threads the bilayer; the sequence is LIVSFIAILIIPILILEFSSY. At 38-282 the chain is on the extracellular side; that stretch reads RSASGKLDQE…IKDASKSVLT (245 aa). One can recognise a Cache domain in the interval 153-229; that stretch reads VTDPYVAASD…KAGEKLSGDW (77 aa). Residues 283–303 traverse the membrane as a helical segment; the sequence is TGMIVLIASIVAGGILILFIV. One can recognise an HAMP domain in the interval 304–356; that stretch reads RSITKPLKRLVQSSKTISRGDLTETIEIHSKDELGELGESFNEMGQSLRSLIS. The Cytoplasmic segment spans residues 304-662; sequence RSITKPLKRL…RDLTKQFKIE (359 aa). Q371 and Q595 each carry glutamate methyl ester (Gln). The Methyl-accepting transducer domain maps to 375–611; that stretch reads SAGQTSKATE…HVSAAVSGIA (237 aa). E630 and E637 each carry glutamate methyl ester (Glu).

It belongs to the methyl-accepting chemotaxis (MCP) protein family. Interacts with FloT. In terms of processing, some glutamine residues are deamidated to glutamate by CheD and subsequently methylated. The demethylation is selective. Gln-371 is demethylated only upon asparagine addition whereas Glu-637 is demethylated only upon asparagine removal. Glu-630 appears indiscriminate and is demethylated upon both addition and removal of asparagine.

It localises to the cell membrane. The protein resides in the membrane raft. Chemotactic-signal transducers respond to changes in the concentration of attractants and repellents in the environment, transduce a signal from the outside to the inside of the cell, and facilitate sensory adaptation through the variation of the level of methylation. All amino acids serve as attractants in B.subtilis, they appear to cause an increase in the turnover methyl groups, leading to methylation of an unidentified acceptor, while repellents have been shown to cause a decrease in methyl group turnover. The methyl groups are added by a methyltransferase and removed by a methylesterase. McpB is required for taxis towards asparagine, aspartate, glutamine, and histidine. The protein is Methyl-accepting chemotaxis protein McpB (mcpB) of Bacillus subtilis (strain 168).